We begin with the raw amino-acid sequence, 102 residues long: MAESKMRIKLKGYDHAIVDQSIVKIIQAAEGTGAKVRGPIPLPTEKQVITILRAVHKYKDSREQFDMRTHKRLLEILNPTAATMDILKRVQLPSGVDIEIKL.

This sequence belongs to the universal ribosomal protein uS10 family. In terms of assembly, part of the 30S ribosomal subunit.

In terms of biological role, involved in the binding of tRNA to the ribosomes. This is Small ribosomal subunit protein uS10 from Mycoplasma mycoides subsp. mycoides SC (strain CCUG 32753 / NCTC 10114 / PG1).